A 258-amino-acid polypeptide reads, in one-letter code: Peptidase inhibitor 15 (258 aa).

The N-terminal stretch at 1 to 21 (MTIIAAISCVFLFSILCETSA) is a signal peptide. Residues 22-60 (LVLPNSTDLLLSNNNFTDIETALAAHLDSAKIPKARRKR) constitute a propeptide that is removed on maturation. Residues N26, N36, and N124 are each glycosylated (N-linked (GlcNAc...) asparagine). Residues 71 to 211 (LDYHNQVRGK…RRAVYLVCNY (141 aa)) enclose the SCP domain.

Belongs to the CRISP family.

Its subcellular location is the secreted. Functionally, serine protease inhibitor which displays weak inhibitory activity against trypsin. May play a role in facial patterning during embryonic development. The polypeptide is Peptidase inhibitor 15 (PI15) (Gallus gallus (Chicken)).